The following is a 247-amino-acid chain: V-type proton ATPase subunit D (247 aa).

Belongs to the V-ATPase D subunit family. In terms of assembly, V-ATPase is a heteromultimeric enzyme made up of two complexes: the ATP-hydrolytic V1 complex and the proton translocation V0 complex. The V1 complex consists of three catalytic AB heterodimers that form a heterohexamer, three peripheral stalks each consisting of EG heterodimers, one central rotor including subunits D and F, and the regulatory subunits C and H. The proton translocation complex V0 consists of the proton transport subunit a, a ring of proteolipid subunits c9c'', rotary subunit d, subunits e and f, and the accessory subunits ATP6AP1/Ac45 and ATP6AP2/PRR. Interacts with SNX10. As to expression, expressed in brain (at protein level). Present in tissues active in secretion. Amounts elevated in brain, kidney and testis.

It is found in the membrane. It localises to the cytoplasmic vesicle. The protein localises to the clathrin-coated vesicle membrane. The protein resides in the cytoplasm. Its subcellular location is the cytoskeleton. It is found in the microtubule organizing center. It localises to the centrosome. The protein localises to the cell projection. The protein resides in the cilium. Functionally, subunit of the V1 complex of vacuolar(H+)-ATPase (V-ATPase), a multisubunit enzyme composed of a peripheral complex (V1) that hydrolyzes ATP and a membrane integral complex (V0) that translocates protons. V-ATPase is responsible for acidifying and maintaining the pH of intracellular compartments and in some cell types, is targeted to the plasma membrane, where it is responsible for acidifying the extracellular environment. May play a role in cilium biogenesis through regulation of the transport and the localization of proteins to the cilium. The chain is V-type proton ATPase subunit D (ATP6V1D) from Bos taurus (Bovine).